A 241-amino-acid chain; its full sequence is Carboxy-S-adenosyl-L-methionine synthase (241 aa).

Residues Tyr-38, 63 to 65, 88 to 89, 116 to 117, Asn-131, and Arg-198 each bind S-adenosyl-L-methionine; these read GCS, DN, and DI.

It belongs to the class I-like SAM-binding methyltransferase superfamily. Cx-SAM synthase family. As to quaternary structure, homodimer.

The catalysed reaction is prephenate + S-adenosyl-L-methionine = carboxy-S-adenosyl-L-methionine + 3-phenylpyruvate + H2O. Catalyzes the conversion of S-adenosyl-L-methionine (SAM) to carboxy-S-adenosyl-L-methionine (Cx-SAM). This Haemophilus influenzae (strain 86-028NP) protein is Carboxy-S-adenosyl-L-methionine synthase.